The sequence spans 145 residues: Peptide methionine sulfoxide reductase MsrB (145 aa).

Residues 4–127 (KEELRQRIGD…NSAALKFIPY (124 aa)) form the MsrB domain. The Nucleophile role is filled by Cys116.

It belongs to the MsrB Met sulfoxide reductase family.

It carries out the reaction L-methionyl-[protein] + [thioredoxin]-disulfide + H2O = L-methionyl-(R)-S-oxide-[protein] + [thioredoxin]-dithiol. This chain is Peptide methionine sulfoxide reductase MsrB, found in Streptococcus equi subsp. zooepidemicus (strain H70).